Reading from the N-terminus, the 484-residue chain is Glutamate--tRNA ligase (484 aa).

Residues 11–21 (PSPTGYLHIGN) carry the 'HIGH' region motif. Residues 252 to 256 (KLSKR) carry the 'KMSKS' region motif. Lys-255 serves as a coordination point for ATP.

The protein belongs to the class-I aminoacyl-tRNA synthetase family. Glutamate--tRNA ligase type 1 subfamily. As to quaternary structure, monomer.

It localises to the cytoplasm. The catalysed reaction is tRNA(Glu) + L-glutamate + ATP = L-glutamyl-tRNA(Glu) + AMP + diphosphate. Its function is as follows. Catalyzes the attachment of glutamate to tRNA(Glu) in a two-step reaction: glutamate is first activated by ATP to form Glu-AMP and then transferred to the acceptor end of tRNA(Glu). The chain is Glutamate--tRNA ligase from Staphylococcus aureus (strain Mu3 / ATCC 700698).